Here is a 384-residue protein sequence, read N- to C-terminus: Dehydrogenase ALT3 (384 aa).

It belongs to the iron-containing alcohol dehydrogenase family. It depends on Fe cation as a cofactor.

It participates in mycotoxin biosynthesis. In terms of biological role, dehydrogenase; part of the gene cluster that mediates the biosynthesis of the host-selective toxins (HSTs) AAL-toxins, sphinganine-analog mycotoxins responsible for Alternaria stem canker on tomato by the tomato pathotype. The biosynthesis starts with the polyketide synthase ALT1-catalyzed C-16 carbon chain assembly from one starter acetyl-CoA unit with malonyl-CoA extender units. ALT1 also selectively transfers methyl groups at the first and the third cycle of chain elongation for AAL toxin. The C-16 polyketide chain is released from the enzyme by a nucleophilic attack of a carbanion, which is derived from R-carbon of glycin by decarboxylation, on the carbonyl carbon of polyketide acyl chain. This step is probably catalyzed by a pyridoxal 5'-phosphate-dependent aminoacyl transferase ALT4. The respective functions of the other enzymes encoded by the cluster have still to be elucidated. The sphingosine N-acyltransferase-like protein ALT7 seems not to act as a resistance/self-tolerance factor against the toxin in the toxin biosynthetic gene cluster, contrary to what is expected. This chain is Dehydrogenase ALT3, found in Alternaria alternata (Alternaria rot fungus).